Consider the following 324-residue polypeptide: Probable peptidylglycine alpha-hydroxylating monooxygenase 1 (324 aa).

The first 22 residues, 1–22 (MPRFYLLSSCALLAFATSFCNA), serve as a signal peptide directing secretion. Cystine bridges form between cysteine 41–cysteine 85 and cysteine 73–cysteine 101. Cu cation-binding residues include histidine 66 and histidine 67. Histidine 142 serves as a coordination point for Cu cation. N-linked (GlcNAc...) asparagine glycosylation occurs at asparagine 182. Cu cation is bound by residues histidine 207, histidine 209, and methionine 284. Cysteine 264 and cysteine 285 are oxidised to a cystine.

The protein belongs to the copper type II ascorbate-dependent monooxygenase family. It depends on Cu(2+) as a cofactor.

It localises to the secreted. The enzyme catalyses a [peptide]-C-terminal glycine + 2 L-ascorbate + O2 = a [peptide]-C-terminal (2S)-2-hydroxyglycine + 2 monodehydro-L-ascorbate radical + H2O. Functionally, monooxygenase that catalyzes an essential reaction in C-terminal alpha-amidation of peptides. Produces an unstable peptidyl(2-hydroxyglycine) intermediate. C-terminal amidation of peptides such as neuropeptides is essential for full biological activity. The protein is Probable peptidylglycine alpha-hydroxylating monooxygenase 1 of Caenorhabditis elegans.